The following is a 406-amino-acid chain: Multidrug resistance protein MdtG (406 aa).

A run of 11 helical transmembrane segments spans residues 16–36 (VAWL…PFLP), 56–76 (LVFS…GGLA), 90–110 (LGMA…QFLL), 113–133 (ALLG…ATQV), 144–164 (TLST…GLLA), 171–191 (PVFF…LFFT), 222–242 (LFVT…ILTL), 254–274 (IAFI…LSAP), 288–308 (ILIT…FVQT), 317–337 (FLLG…LVYN), and 376–396 (AVFC…WNSL).

Belongs to the major facilitator superfamily. DHA1 family. MdtG (TC 2.A.1.2.20) subfamily.

Its subcellular location is the cell inner membrane. The protein is Multidrug resistance protein MdtG of Citrobacter koseri (strain ATCC BAA-895 / CDC 4225-83 / SGSC4696).